A 263-amino-acid polypeptide reads, in one-letter code: MSNASLLSTEAAAALLKAATADGRSIAPLRDRLAIADQDSAYAVQEINTRAWLAEGRRLVGRKIGLTSLAVQAQLGVDQPDFGMLFADMAVGDGEIVAAGRLIQPKVEAEVALILGRDLTQERHTYADLIRATEYAVPSIEIVDSRIENWNIKFVDTVADNASSGLFVLGGRPVRLSDIDLTACAMEMKRGDEIVSRGNGRACLGSPLNAAIWLADMMVRCGRPLQAGDIVLTGALGPMVAVKSGDRFDVSIDGLGNVSALFA.

It belongs to the hydratase/decarboxylase family. MhpD subfamily. A divalent metal cation serves as cofactor.

The enzyme catalyses (S)-4-hydroxy-2-oxopentanoate = (2Z)-2-hydroxypenta-2,4-dienoate + H2O. It functions in the pathway aromatic compound metabolism; 3-phenylpropanoate degradation. Functionally, catalyzes the conversion of 2-hydroxypentadienoic acid (enolic form of 2-oxopent-4-enoate) to 4-hydroxy-2-ketopentanoic acid. This is 2-keto-4-pentenoate hydratase 1 from Dechloromonas aromatica (strain RCB).